Consider the following 459-residue polypeptide: Putrescine aminotransferase (459 aa).

Residues 150–151 (GT) and Gln-274 contribute to the pyridoxal 5'-phosphate site. N6-(pyridoxal phosphate)lysine is present on Lys-300. Residue Thr-332 participates in pyridoxal 5'-phosphate binding.

It belongs to the class-III pyridoxal-phosphate-dependent aminotransferase family. Putrescine aminotransferase subfamily. Requires pyridoxal 5'-phosphate as cofactor.

It catalyses the reaction an alkane-alpha,omega-diamine + 2-oxoglutarate = an omega-aminoaldehyde + L-glutamate. It carries out the reaction putrescine + 2-oxoglutarate = 1-pyrroline + L-glutamate + H2O. The catalysed reaction is cadaverine + 2-oxoglutarate = 5-aminopentanal + L-glutamate. The protein operates within amine and polyamine degradation; putrescine degradation; 4-aminobutanal from putrescine (transaminase route): step 1/1. Functionally, catalyzes the aminotransferase reaction from putrescine to 2-oxoglutarate, leading to glutamate and 4-aminobutanal, which spontaneously cyclizes to form 1-pyrroline. This is the first step in one of two pathways for putrescine degradation, where putrescine is converted into 4-aminobutanoate (gamma-aminobutyrate or GABA) via 4-aminobutanal. Also functions as a cadaverine transaminase in a a L-lysine degradation pathway to succinate that proceeds via cadaverine, glutarate and L-2-hydroxyglutarate. The polypeptide is Putrescine aminotransferase (Escherichia fergusonii (strain ATCC 35469 / DSM 13698 / CCUG 18766 / IAM 14443 / JCM 21226 / LMG 7866 / NBRC 102419 / NCTC 12128 / CDC 0568-73)).